The chain runs to 224 residues: Menaquinol:cytochrome c reductase cytochrome b subunit (224 aa).

Residues 37-57 (FSAFVYCFGGLTFFVTVIQVL) traverse the membrane as a helical segment. Y42 contributes to the heme b binding site. A heme c-binding site is contributed by C43. Positions 91, 94, 108, and 111 each coordinate heme b. 3 consecutive transmembrane segments (helical) span residues 96–116 (WGASLVIVMMFLHTLRVFFQG), 126–146 (WIVGVLIFFVMLGLGFTGYLL), and 195–215 (IHVFFLPAALFGLMAAHFIMI). Residues H196 and H211 each contribute to the heme b site. Heme c contacts are provided by R216 and I220. S221 lines the heme b pocket.

It belongs to the cytochrome b family. In terms of assembly, the main subunits of the menaquinol:cytochrome c complex are a Rieske-type iron-sulfur protein (QcrA), a cytochrome b (QcrB) and a cytochrome c (QcrC). Heme b is required as a cofactor. Requires heme c as cofactor.

It localises to the cell membrane. In terms of biological role, component of the menaquinol:cytochrome c reductase complex. This Bacillus subtilis (strain 168) protein is Menaquinol:cytochrome c reductase cytochrome b subunit.